The primary structure comprises 103 residues: Small ribosomal subunit protein uS10 (103 aa).

Belongs to the universal ribosomal protein uS10 family. As to quaternary structure, part of the 30S ribosomal subunit.

In terms of biological role, involved in the binding of tRNA to the ribosomes. The sequence is that of Small ribosomal subunit protein uS10 from Idiomarina loihiensis (strain ATCC BAA-735 / DSM 15497 / L2-TR).